A 159-amino-acid chain; its full sequence is Dihydrofolate reductase (159 aa).

Residues 2 to 157 (TLSILVAHDL…IPHTFLHLIR (156 aa)) enclose the DHFR domain. 6 to 8 (LVA) provides a ligand contact to substrate. Residues 7-8 (VA) and 15-20 (IGFENQ) each bind NADP(+). Asp28 serves as a coordination point for substrate. Residue 44 to 47 (GRKT) participates in NADP(+) binding. Arg58 is a binding site for substrate. NADP(+) is bound by residues 63–66 (LTSD) and 93–98 (FGGQIL). Thr112 is a substrate binding site.

This sequence belongs to the dihydrofolate reductase family.

It carries out the reaction (6S)-5,6,7,8-tetrahydrofolate + NADP(+) = 7,8-dihydrofolate + NADPH + H(+). Its pathway is cofactor biosynthesis; tetrahydrofolate biosynthesis; 5,6,7,8-tetrahydrofolate from 7,8-dihydrofolate: step 1/1. Its function is as follows. Key enzyme in folate metabolism. Catalyzes an essential reaction for de novo glycine and purine synthesis, and for DNA precursor synthesis. This Staphylococcus aureus (strain MW2) protein is Dihydrofolate reductase (folA).